Reading from the N-terminus, the 31-residue chain is Protein YmiC (31 aa).

A helical transmembrane segment spans residues 9-29 (WSWMGAFSLSMLFWAELLWII).

It localises to the cell inner membrane. This Escherichia coli (strain K12) protein is Protein YmiC.